Consider the following 404-residue polypeptide: Tryptophan synthase beta chain (404 aa).

Lysine 94 is subject to N6-(pyridoxal phosphate)lysine.

The protein belongs to the TrpB family. As to quaternary structure, tetramer of two alpha and two beta chains. Pyridoxal 5'-phosphate is required as a cofactor.

The catalysed reaction is (1S,2R)-1-C-(indol-3-yl)glycerol 3-phosphate + L-serine = D-glyceraldehyde 3-phosphate + L-tryptophan + H2O. Its pathway is amino-acid biosynthesis; L-tryptophan biosynthesis; L-tryptophan from chorismate: step 5/5. Functionally, the beta subunit is responsible for the synthesis of L-tryptophan from indole and L-serine. In Staphylococcus aureus (strain MRSA252), this protein is Tryptophan synthase beta chain.